A 123-amino-acid polypeptide reads, in one-letter code: U9-barytoxin-Tl1a (123 aa).

The N-terminal stretch at Met1–Gly18 is a signal peptide. A propeptide spanning residues Ala19–Arg77 is cleaved from the precursor. 3 disulfide bridges follow: Cys78/Cys93, Cys85/Cys98, and Cys92/Cys112.

It belongs to the neurotoxin 14 (magi-1) family. 05 (ICK-7) subfamily. ICK-7 sub-subfamily. In terms of tissue distribution, expressed by the venom gland.

It localises to the secreted. Functionally, ion channel inhibitor. The protein is U9-barytoxin-Tl1a of Trittame loki (Brush-footed trapdoor spider).